The chain runs to 85 residues: Putative membrane protein insertion efficiency factor (85 aa).

Belongs to the UPF0161 family.

It localises to the cell membrane. Could be involved in insertion of integral membrane proteins into the membrane. The protein is Putative membrane protein insertion efficiency factor of Buchnera aphidicola subsp. Schizaphis graminum (strain Sg).